Here is an 85-residue protein sequence, read N- to C-terminus: MSDVNIRLECLRPAERWVQPTGAEIREVLHLAGLTGGQAARILGLGAKGDRTVRRWVGEDSPIPYAAWAILCDLAGIGAIWKGQG.

A DNA-binding region (H-T-H motif) is located at residues 28 to 47 (VLHLAGLTGGQAARILGLGA).

Acts with KorA as corepressor in the control of the kilC and kilE operons. The protein is Transcriptional repressor protein KorC (korC) of Escherichia coli.